A 780-amino-acid chain; its full sequence is Replication origin-binding protein (780 aa).

Residues 39–195 (SFENVRQPIK…AAFKPDTQIA (157 aa)) enclose the Helicase ATP-binding domain. ATP is bound at residue 52 to 59 (AAMGSGKT).

Belongs to the herpesviridae OriBP family.

Probably involved in DNA replication. Binds the origin of replication (ori). The protein is Replication origin-binding protein (U73) of Homo sapiens (Human).